The sequence spans 24 residues: Brevinin-1PTa (24 aa).

Cys18 and Cys24 form a disulfide bridge.

In terms of tissue distribution, expressed by the skin glands.

Its subcellular location is the secreted. Has antibacterial activity against the Gram-positive bacterium S.aureus ATCC 25923 (MIC=3 uM) and the Gram-negative bacterium E.coli ATCC 25726 (MIC=24 uM). The polypeptide is Brevinin-1PTa (Pulchrana picturata (Malaysian fire frog)).